We begin with the raw amino-acid sequence, 337 residues long: Ketol-acid reductoisomerase (NADP(+)) (337 aa).

One can recognise a KARI N-terminal Rossmann domain in the interval 1-180 (MFYEKDADVD…GGGKSGIIET (180 aa)). NADP(+) is bound by residues 22-25 (YGSQ), R46, S49, S51, and 81-84 (DELQ). Residue H106 is part of the active site. G132 is a binding site for NADP(+). Residues 181 to 326 (TFKDECETDL…AELRAMMPWI (146 aa)) form the KARI C-terminal knotted domain. Mg(2+)-binding residues include D189, E193, E225, and E229. S250 provides a ligand contact to substrate.

Belongs to the ketol-acid reductoisomerase family. Requires Mg(2+) as cofactor.

It catalyses the reaction (2R)-2,3-dihydroxy-3-methylbutanoate + NADP(+) = (2S)-2-acetolactate + NADPH + H(+). It carries out the reaction (2R,3R)-2,3-dihydroxy-3-methylpentanoate + NADP(+) = (S)-2-ethyl-2-hydroxy-3-oxobutanoate + NADPH + H(+). The protein operates within amino-acid biosynthesis; L-isoleucine biosynthesis; L-isoleucine from 2-oxobutanoate: step 2/4. It participates in amino-acid biosynthesis; L-valine biosynthesis; L-valine from pyruvate: step 2/4. In terms of biological role, involved in the biosynthesis of branched-chain amino acids (BCAA). Catalyzes an alkyl-migration followed by a ketol-acid reduction of (S)-2-acetolactate (S2AL) to yield (R)-2,3-dihydroxy-isovalerate. In the isomerase reaction, S2AL is rearranged via a Mg-dependent methyl migration to produce 3-hydroxy-3-methyl-2-ketobutyrate (HMKB). In the reductase reaction, this 2-ketoacid undergoes a metal-dependent reduction by NADPH to yield (R)-2,3-dihydroxy-isovalerate. This Pelagibacter ubique (strain HTCC1062) protein is Ketol-acid reductoisomerase (NADP(+)).